A 595-amino-acid chain; its full sequence is RuBisCO large subunit-binding protein subunit beta, chloroplastic (595 aa).

The transit peptide at 1–49 (MASTFSATTSSCNLSSSAAISSFPLAAGKRNANKVVLPRKNRNVKVSAM) directs the protein to the chloroplast.

It belongs to the chaperonin (HSP60) family. Oligomer of probably six alpha and six beta subunits.

It is found in the plastid. The protein resides in the chloroplast. This protein binds RuBisCO small and large subunits and is implicated in the assembly of the enzyme oligomer. This Pisum sativum (Garden pea) protein is RuBisCO large subunit-binding protein subunit beta, chloroplastic.